Reading from the N-terminus, the 450-residue chain is Gastrin/cholecystokinin type B receptor (450 aa).

The Extracellular segment spans residues 1–57 (MELLKLNSSVQGPGPGSGSSLCHPGVSLLNSSSAGNLSCEPPRIRGTGTRELELAIR). N-linked (GlcNAc...) asparagine glycosylation is found at asparagine 7, asparagine 30, and asparagine 36. Residues 58–79 (ITLYAVIFLMSIGGNMLIIVVL) traverse the membrane as a helical segment. Residues 80–87 (GLSRRLRT) are Cytoplasmic-facing. A helical membrane pass occupies residues 88–109 (VTNAFLLSLAVSDLLLAVACMP). The Extracellular portion of the chain corresponds to 110–131 (FTLLPNLMGTFIFGTVICKAVS). Cysteine 127 and cysteine 205 form a disulfide bridge. Residues 132–150 (YLMGVSVSVSTLNLVAIAL) form a helical membrane-spanning segment. Residues 151–170 (ERYSAICRPLQARVWQTRSH) are Cytoplasmic-facing. Residues 171-189 (AARVILATWLLSGLLMVPY) traverse the membrane as a helical segment. Residues 190-219 (PVYTVVQPVGPRVLQCMHRWPSARVRQTWS) lie on the Extracellular side of the membrane. Residues 220–242 (VLLLMLLFFIPGVVMAVAYGLIS) traverse the membrane as a helical segment. The Cytoplasmic portion of the chain corresponds to 243-336 (RELYLGLRFD…KLLAKKRVVR (94 aa)). Positions 258–277 (DTQSRVRNQGGLPGGTAPGP) are disordered. A helical membrane pass occupies residues 337-358 (MLLVIVLLFFLCWLPIYSANTW). Residues 359–376 (CAFDGPGAHRALSGAPIS) lie on the Extracellular side of the membrane. A helical membrane pass occupies residues 377–397 (FIHLLSYASACVNPLVYCFMH). Topologically, residues 398–450 (RRFRQACLDTCARCCPRPPRARPRPLPDEDPPTPSIASLSRLSYTTISTLGPG) are cytoplasmic. Cysteine 411 carries the S-palmitoyl cysteine lipid modification.

The protein belongs to the G-protein coupled receptor 1 family. Stomach and brain.

The protein localises to the cell membrane. Receptor for gastrin and cholecystokinin. The CCK-B receptors occur throughout the central nervous system where they modulate anxiety, analgesia, arousal, and neuroleptic activity. This receptor mediates its action by association with G proteins that activate a phosphatidylinositol-calcium second messenger system. This chain is Gastrin/cholecystokinin type B receptor (CCKBR), found in Mastomys natalensis (African soft-furred rat).